Consider the following 181-residue polypeptide: MRPMHGTTVLCVRREGRVVIAGDGQVTLDKTVMKATARKVRRLGEGQVVAGFAGATADAFQLFELFEKKLKEHARSLPRAAVELAKQWRTDRMLRRLEALLLVADREHLLVLSGAGDVIEPDPVANGAAAAIGSGGPYALAAARALLAHSALDARQVAEEAMKLAAEICIYTNGNLTIEEL.

The active site involves T7. The Na(+) site is built by A166, C169, and T172.

It belongs to the peptidase T1B family. HslV subfamily. As to quaternary structure, a double ring-shaped homohexamer of HslV is capped on each side by a ring-shaped HslU homohexamer. The assembly of the HslU/HslV complex is dependent on binding of ATP.

It localises to the cytoplasm. It carries out the reaction ATP-dependent cleavage of peptide bonds with broad specificity.. Allosterically activated by HslU binding. In terms of biological role, protease subunit of a proteasome-like degradation complex believed to be a general protein degrading machinery. The protein is ATP-dependent protease subunit HslV of Anaeromyxobacter dehalogenans (strain 2CP-1 / ATCC BAA-258).